The following is a 692-amino-acid chain: MNKHLHFLSLLWLSMLMAFMTACSDDKNITDPAPEPEPPVEGQWTALTASPDTWDETKRADISYQLLLYSFADSDGDGYGDLNGVTQKLDYLNQLGVKALWLSPIHPCMSYHGYDVTDYTKVNPQLGTESDFDRLVTEAHNRGIKIYLDYVMNHTGTAHPWFTEASSSSESPYRNYYSFSEDPKTDIAAGKIAMITQEGAAGYNAAEWFQVSDETAAVKGLLKFTLDWSNAPSPILVVSTGTKADEDNPDTGTDNAKYLYYGEDICKKFYDKGNNIYELTVDFESTWGLLIRTSNASFWPSGTKYGASSSSEKLALNKDFKLTNAGNPANIMFDSQQITYFHSHFCTDWFADLNYGPVDQAGESPAYQAIADAAKGWIARGVDGLRLDAVKHIYHSETSEENPRFLKMFYEDMNAYYKQKGHTDDFYMIGEVLSEYDKVAPYYKGLPALFEFSFWYRLEWGINNSTGCYFAKDILSYQQKYANYRSDYIEATKLSNHDEDRTSSKLGKSADKCKLAAAVLLTSAGHPYIYYGEELGLYGTKDNGDEYVRSPMLWGDSYTTNYTDKTDATVSKNVKTVADQQADTHSLLNIYFSLTRLRNTYPALAEGNMTKHSVYNESQEKDYKPIAAWYMTKDNEKLLVIHNFGGTAMQLPLTDKIEKVLFVNGETQQNTDSDSYTLKLGGYASVVFKLGN.

An N-terminal signal peptide occupies residues 1–22; the sequence is MNKHLHFLSLLWLSMLMAFMTA. Cysteine 23 carries N-palmitoyl cysteine lipidation. A lipid anchor (S-diacylglycerol cysteine) is attached at cysteine 23. Residues aspartate 73, aspartate 75, aspartate 77, tyrosine 79, and aspartate 81 each coordinate Mg(2+). Residue asparagine 153 participates in Ca(2+) binding. 3 starch binding regions span residues histidine 154, 260 to 263, and 330 to 333; these read YYGE and NIMF. Aspartate 352 contributes to the Ca(2+) binding site. Residues 386–392 are starch binding; the sequence is RLDAVKH. The Nucleophile role is filled by aspartate 388. Residue histidine 392 coordinates Ca(2+). The active-site Proton donor is glutamate 431. Residues aspartate 437 and arginine 457 are each a region of interest (starch binding).

Belongs to the glycosyl hydrolase 13 family. As to quaternary structure, monomer. Ca(2+) serves as cofactor.

The protein resides in the cell outer membrane. The catalysed reaction is Endohydrolysis of (1-&gt;4)-alpha-D-glucosidic linkages in polysaccharides containing three or more (1-&gt;4)-alpha-linked D-glucose units.. The protein operates within glycan degradation; starch degradation. Functionally, alpha-amylase that cleaves starch into oligosaccharides before internalization for degradation, the first step in starch degradation. The chain is Alpha-amylase SusG (susG) from Bacteroides thetaiotaomicron (strain ATCC 29148 / DSM 2079 / JCM 5827 / CCUG 10774 / NCTC 10582 / VPI-5482 / E50).